The following is a 505-amino-acid chain: Exodeoxyribonuclease 7 large subunit (505 aa).

The tract at residues 466-505 (SGDRDAVIDGEGGPAPAPTAPAPKPRPKPAAPPAGQGDLF) is disordered. Over residues 480-497 (APAPTAPAPKPRPKPAAP) the composition is skewed to pro residues.

This sequence belongs to the XseA family. In terms of assembly, heterooligomer composed of large and small subunits.

Its subcellular location is the cytoplasm. It carries out the reaction Exonucleolytic cleavage in either 5'- to 3'- or 3'- to 5'-direction to yield nucleoside 5'-phosphates.. Its function is as follows. Bidirectionally degrades single-stranded DNA into large acid-insoluble oligonucleotides, which are then degraded further into small acid-soluble oligonucleotides. This Caulobacter vibrioides (strain NA1000 / CB15N) (Caulobacter crescentus) protein is Exodeoxyribonuclease 7 large subunit.